Here is a 501-residue protein sequence, read N- to C-terminus: Glutamyl-tRNA(Gln) amidotransferase subunit A (501 aa).

Catalysis depends on charge relay system residues K84 and S159. Residue S183 is the Acyl-ester intermediate of the active site.

The protein belongs to the amidase family. GatA subfamily. Heterotrimer of A, B and C subunits.

It carries out the reaction L-glutamyl-tRNA(Gln) + L-glutamine + ATP + H2O = L-glutaminyl-tRNA(Gln) + L-glutamate + ADP + phosphate + H(+). Its function is as follows. Allows the formation of correctly charged Gln-tRNA(Gln) through the transamidation of misacylated Glu-tRNA(Gln) in organisms which lack glutaminyl-tRNA synthetase. The reaction takes place in the presence of glutamine and ATP through an activated gamma-phospho-Glu-tRNA(Gln). The polypeptide is Glutamyl-tRNA(Gln) amidotransferase subunit A (Streptomyces avermitilis (strain ATCC 31267 / DSM 46492 / JCM 5070 / NBRC 14893 / NCIMB 12804 / NRRL 8165 / MA-4680)).